A 188-amino-acid chain; its full sequence is Small ribosomal subunit protein uS7 (188 aa).

It belongs to the universal ribosomal protein uS7 family. In terms of assembly, part of the 30S ribosomal subunit.

Its function is as follows. One of the primary rRNA binding proteins, it binds directly to 16S rRNA where it nucleates assembly of the head domain of the 30S subunit. Is located at the subunit interface close to the decoding center. The chain is Small ribosomal subunit protein uS7 from Methanococcus aeolicus (strain ATCC BAA-1280 / DSM 17508 / OCM 812 / Nankai-3).